A 206-amino-acid polypeptide reads, in one-letter code: Max dimerization protein 3 (206 aa).

The interaction with SIN3A and SIN3B stretch occupies residues 8–25; that stretch reads IQVLLQAAEFLERREREA. Disordered regions lie at residues 29–66 and 122–171; these read YASL…NELE and KLRS…QEDL. Residues 57–109 form the bHLH domain; the sequence is SGRSVHNELEKRRRAQLKRCLEQLRQQMPLGVDCTRYTTLSLLRRARVHIQKL. Low complexity predominate over residues 126–138; that stretch reads KQQSLQQQLEQLQ. A compositionally biased stretch (basic and acidic residues) spans 143–153; the sequence is ARERERLRADS.

In terms of assembly, efficient DNA binding requires dimerization with another bHLH protein. Binds DNA as a heterodimer with MAX. Interacts with SIN3A AND SIN3B. Interacts with RNF17. Expressed only in the proliferating areas of the testis and thymus.

Its subcellular location is the nucleus. In terms of biological role, transcriptional repressor. Binds with MAX to form a sequence-specific DNA-binding protein complex which recognizes the core sequence 5'-CAC[GA]TG-3'. Antagonizes MYC transcriptional activity by competing for MAX and suppresses MYC dependent cell transformation. The sequence is that of Max dimerization protein 3 (Mxd3) from Mus musculus (Mouse).